The sequence spans 404 residues: Pectate lyase E (404 aa).

The signal sequence occupies residues 1–41 (MNNSRMSSVSTQKTTGRSALGTKSALAAIIATTMMVSVASA). Ca(2+)-binding residues include Asp-182 and Asp-225. Residue Arg-278 is part of the active site.

This sequence belongs to the polysaccharide lyase 1 family. PLBC subfamily. The cofactor is Ca(2+).

The protein resides in the secreted. It catalyses the reaction Eliminative cleavage of (1-&gt;4)-alpha-D-galacturonan to give oligosaccharides with 4-deoxy-alpha-D-galact-4-enuronosyl groups at their non-reducing ends.. Its pathway is glycan metabolism; pectin degradation; 2-dehydro-3-deoxy-D-gluconate from pectin: step 2/5. Its function is as follows. Involved in maceration and soft-rotting of plant tissue. Pectate lyases have been implicated as pathogenicity factors which induce maceration or rotting of plant tissue. PelE is sufficient to induce these effects under laboratory conditions. This Dickeya chrysanthemi (Pectobacterium chrysanthemi) protein is Pectate lyase E (pelE).